Reading from the N-terminus, the 750-residue chain is MAHRKRQSTASSMLDHRARPGPIPHDQEPESEDTELPLESYVPTGLELGTLRPESPTPEEQECHNHSPDGDSSSDYVNNTSEEEDYDEGLPEEEEGVTYYIRYCPEDDSYLEGMDCNGEEYIAHGAHPVDTDECQEAVEDWTDSVGPHTHSHGAENSQEYPDGHLPIPEDDPTVLEVHDQEEDGHYCSSKESYQDYYPPETNGNTGGASPYRMRRGDGDLEEQEEDIDQIVAEIKMSLSMTSITSASEASPEHMPELDPGDSTEACPPSDTGHGPGRQEARPKSLNLPPEVKHPGDLQRGLKTKTRTPEERPKWPQEQVCNGLEQPRKQQRSDLNGPTDNNNIPETKKVASFPSFVAVPGPCEAEDLIDGIIFAANYLGSTQLLSERNPSKNIRMMQAQEAVSRVKRMQKAAKIKKKANSEGDAQTLTEVDLFISTQRIKVLNADTQETMMDHALRTISYIADIGNIVVLMARRRMPRSASQDCIETTPGAQEGKKQYKMICHVFESEDAQLIAQSIGQAFSVAYQEFLRANGINPEDLSQKEYSDIINTQEMYNDDLIHFSNSENCKELQLEKHKGEILGVVVVESGWGSILPTVILANMMNGGPAARSGKLSIGDQIMSINGTSLVGLPLATCQGIIKGLKNQTQVKLNIVSCPPVTTVLIKRPDLKYQLGFSVQNGIICSLMRGGIAERGGVRVGHRIIEINGQSVVATAHEKIVQALSNSVGEIHMKTMPAAMFRLLTGQETPLYI.

2 disordered regions span residues methionine 1–glutamate 94 and aspartate 143–threonine 346. Position 11 is a phosphoserine (serine 11). A compositionally biased stretch (polar residues) spans glycine 70–threonine 80. Residues serine 81 to glutamate 94 show a composition bias toward acidic residues. An STXBP1-binding region spans residues histidine 185–threonine 271. Serine 209 is modified (phosphoserine). Acidic residues predominate over residues aspartate 219–aspartate 228. 2 stretches are compositionally biased toward polar residues: residues leucine 238–glutamate 248 and serine 332–proline 344. The 190-residue stretch at leucine 367–aspartate 556 folds into the PID domain. 2 PDZ domains span residues glutamate 569–serine 654 and threonine 660–alanine 736.

In terms of assembly, part of a multimeric complex containing STXBP1 and syntaxin-1. Binds to the cytoplasmic domain of amyloid-beta protein, and to the nuclear factor NF-kappa-B/p65 via its PDZ domain. Interacts with the N-terminal domain of NECAB3. In terms of tissue distribution, specifically expressed in neurons, predominantly of the cerebellum, hippocampus, and spinal cord. Lesser extent in neurons of the cerebral cortex and anterior thalmic nuclei.

Its function is as follows. Putative function in synaptic vesicle exocytosis by binding to STXBP1, an essential component of the synaptic vesicle exocytotic machinery. May modulate processing of the amyloid-beta precursor protein (APP) and hence formation of APP-beta. In Mus musculus (Mouse), this protein is Amyloid-beta A4 precursor protein-binding family A member 2 (Apba2).